A 1331-amino-acid chain; its full sequence is MVEPSEKPNTQNDDVSKQEIRNPVSSSSSTSDKEKVAKKGNSDATKSLTPEDLDAQLAHLPEHEREILKQQLFIPEVKATYGTLFRYATRNDMILLAIVSLASIAAGAALPLFTVLFGSLAGTFRDIALHRITYDEFNSILTRNSLYFVYLGIAQFILLYVSTVGFIYVGEHITQKIRARYLHAILRQNIGFFDKLGAGEVTTRITADTNLIQDGISEKVGLTLTALSTFFSAFIIGYVRYWKLALICTSTIVAMVLVMGGISRFVVKSGRMTLVSYGEGGTVAEEVISSIRNATAFGTQEKLARQYEVHLREARKWGRRLQMMLGIMFGSMMAIMYSNYGLGFWMGSRFLVGGETDLSAIVNILLAIVIGSFSIGNVAPNTQAFASAISAGAKIFSTIDRVSAIDPGSDEGDTIENVEGTIEFRGIKHIYPSRPEVVVMEDINLVVPKGKTTALVGPSGSGKSTVVGLLERFYNPVAGSVFLDGRDIKTLNLRWLRQQISLVSQEPTLFGTTIFENIRLGLIGSPMENESEEQIKERIVSAAKEANAHDFVMGLPDGYATDVGQRGFLLSGGQKQRIAIARAIVSDPKILLLDEATSALDTKSEGVVQAALDAASRGRTTIVIAHRLSTIKSADNIVVIVGGRIAEQGTHDELVDKKGTYLQLVEAQKINEERGEESEDEAVLEKEKEISRQISVPAKSVNSGKYPDEDVEANLGRIDTKKSLSSVILSQKRGQEKETEYSLGTLIRFIAGFNKPERLIMLCGFFFAVLSGAGQPVQSVFFAKGITTLSLPPSLYGKLREDANFWSLMFLMLGLVQLITQSAQGVIFALCSESLIYRARSKSFRAMLRQDIAFFDLSENSTGALTSFLSTETKHLSGVSGATLGTILMVSTTLIVALTVALAFGWKLALVCISTVPVLLLCGFYRFWILAQFQTRAKKAYESSASYACEATSSIRTVASLTRENGVMEIYEGQLNDQAKKSLRSVAKSSLLYAASQSFSFFCLALGFWYGGGLLGKGEYNAFQFFLCISCVIFGSQSAGIVFSFSPDMGKAKSAAADFKRLFDRVPTIDIESPDGEKLETVEGTIEFRDVHFRYPTRPEQPVLRGLNLTVKPGQYIALVGPSGCGKSTTIALVERFYDTLSGGVYIDGKDISRLNVNSYRSHLALVSQEPTLYQGTIRDNVLLGVDRDDVPDEQVFAACKAANIYDFIMSLPDGFATVVGSKGSMLSGGQKQRIAIARALIRDPKVLLLDEATSALDSESEKVVQAALDAAAKGRTTIAVAHRLSTIQKADIIYVFDQGRIVESGTHHELLQNKGRYYELVHMQSLEKTH.

A disordered region spans residues 1–50; it reads MVEPSEKPNTQNDDVSKQEIRNPVSSSSSTSDKEKVAKKGNSDATKSLTP. The segment covering 31 to 41 has biased composition (basic and acidic residues); the sequence is SDKEKVAKKGN. The next 4 helical transmembrane spans lie at 93–113, 147–167, 219–239, and 242–262; these read MILL…LPLF, YFVY…VGFI, KVGL…IGYV, and WKLA…MGGI. An ABC transmembrane type-1 1 domain is found at 97–387; that stretch reads AIVSLASIAA…VAPNTQAFAS (291 aa). N293 is a glycosylation site (N-linked (GlcNAc...) asparagine). The next 2 helical transmembrane spans lie at 325-345 and 358-378; these read LGIM…LGFW and LSAI…IGNV. The ABC transporter 1 domain occupies 422-667; it reads IEFRGIKHIY…KGTYLQLVEA (246 aa). Residue 457–464 participates in ATP binding; that stretch reads GPSGSGKS. N-linked (GlcNAc...) asparagine glycosylation is present at N529. 2 consecutive transmembrane segments (helical) span residues 762–782 and 808–828; these read LCGF…SVFF and LMFL…GVIF. The ABC transmembrane type-1 2 domain occupies 764 to 1051; that stretch reads GFFFAVLSGA…VFSFSPDMGK (288 aa). The N-linked (GlcNAc...) asparagine glycan is linked to N860. Helical transmembrane passes span 884–904, 910–930, 995–1015, and 1025–1045; these read LGTI…ALAF, LVCI…FWIL, ASQS…GGLL, and FFLC…VFSF. Residues 1086–1324 enclose the ABC transporter 2 domain; the sequence is IEFRDVHFRY…KGRYYELVHM (239 aa). N1108 carries an N-linked (GlcNAc...) asparagine glycan. Position 1121 to 1128 (1121 to 1128) interacts with ATP; sequence GPSGCGKS.

The protein belongs to the ABC transporter superfamily. ABCB family. Multidrug resistance exporter (TC 3.A.1.201) subfamily.

Its subcellular location is the cell membrane. It carries out the reaction itraconazole(in) + ATP + H2O = itraconazole(out) + ADP + phosphate + H(+). Its function is as follows. ABC-type efflux transporter involved in the modulation susceptibility to itraconazole. This Trichophyton rubrum (strain ATCC MYA-4607 / CBS 118892) (Athlete's foot fungus) protein is ABC multidrug transporter MDR2.